The chain runs to 323 residues: tRNA dimethylallyltransferase (323 aa).

Residue 12-19 (GPTAAGKT) participates in ATP binding. 14–19 (TAAGKT) contributes to the substrate binding site. 2 interaction with substrate tRNA regions span residues 37-40 (DSAL) and 161-165 (QRLMR).

This sequence belongs to the IPP transferase family. As to quaternary structure, monomer. It depends on Mg(2+) as a cofactor.

The catalysed reaction is adenosine(37) in tRNA + dimethylallyl diphosphate = N(6)-dimethylallyladenosine(37) in tRNA + diphosphate. Catalyzes the transfer of a dimethylallyl group onto the adenine at position 37 in tRNAs that read codons beginning with uridine, leading to the formation of N6-(dimethylallyl)adenosine (i(6)A). The chain is tRNA dimethylallyltransferase from Pseudomonas paraeruginosa (strain DSM 24068 / PA7) (Pseudomonas aeruginosa (strain PA7)).